A 198-amino-acid polypeptide reads, in one-letter code: Ribonuclease HII (198 aa).

Residues 11–198 (NLIAGVDEVG…GPVKRVLGLV (188 aa)) enclose the RNase H type-2 domain. 3 residues coordinate a divalent metal cation: Asp-17, Glu-18, and Asp-109.

It belongs to the RNase HII family. Requires Mn(2+) as cofactor. Mg(2+) serves as cofactor.

It localises to the cytoplasm. It catalyses the reaction Endonucleolytic cleavage to 5'-phosphomonoester.. Its function is as follows. Endonuclease that specifically degrades the RNA of RNA-DNA hybrids. This Yersinia pseudotuberculosis serotype O:3 (strain YPIII) protein is Ribonuclease HII.